We begin with the raw amino-acid sequence, 123 residues long: Small ribosomal subunit protein uS12 (123 aa).

A disordered region spans residues 1-29 (MPTINQLIRKKRQSSASRKKSPALQKCPQ). Residues 8–21 (IRKKRQSSASRKKS) are compositionally biased toward basic residues. Asp89 is modified (3-methylthioaspartic acid).

It belongs to the universal ribosomal protein uS12 family. Part of the 30S ribosomal subunit. Contacts proteins S8 and S17. May interact with IF1 in the 30S initiation complex.

With S4 and S5 plays an important role in translational accuracy. Functionally, interacts with and stabilizes bases of the 16S rRNA that are involved in tRNA selection in the A site and with the mRNA backbone. Located at the interface of the 30S and 50S subunits, it traverses the body of the 30S subunit contacting proteins on the other side and probably holding the rRNA structure together. The combined cluster of proteins S8, S12 and S17 appears to hold together the shoulder and platform of the 30S subunit. This Chlamydia abortus (strain DSM 27085 / S26/3) (Chlamydophila abortus) protein is Small ribosomal subunit protein uS12.